The primary structure comprises 365 residues: Phosphate acyltransferase (365 aa).

This sequence belongs to the PlsX family. In terms of assembly, homodimer. Probably interacts with PlsY.

It localises to the cytoplasm. The catalysed reaction is a fatty acyl-[ACP] + phosphate = an acyl phosphate + holo-[ACP]. It participates in lipid metabolism; phospholipid metabolism. In terms of biological role, catalyzes the reversible formation of acyl-phosphate (acyl-PO(4)) from acyl-[acyl-carrier-protein] (acyl-ACP). This enzyme utilizes acyl-ACP as fatty acyl donor, but not acyl-CoA. This chain is Phosphate acyltransferase, found in Klebsiella pneumoniae (strain 342).